Consider the following 78-residue polypeptide: Large ribosomal subunit protein bL28 (78 aa).

Belongs to the bacterial ribosomal protein bL28 family.

The sequence is that of Large ribosomal subunit protein bL28 from Gloeothece citriformis (strain PCC 7424) (Cyanothece sp. (strain PCC 7424)).